Consider the following 325-residue polypeptide: Probable flavonol synthase 5 (325 aa).

Positions 1 to 21 (MEEERDHNASESSLPSLSKQL) are disordered. Over residues 10–21 (SESSLPSLSKQL) the composition is skewed to polar residues. Residues 180 to 280 (TAEYVLRVNF…RISWPVFVAP (101 aa)) enclose the Fe2OG dioxygenase domain. 188 to 190 (NFY) contacts 2-oxoglutarate. Fe cation-binding residues include His-205, Asp-207, and His-261. 271 to 273 (RIS) lines the 2-oxoglutarate pocket.

This sequence belongs to the iron/ascorbate-dependent oxidoreductase family. Fe(2+) is required as a cofactor. In terms of tissue distribution, expressed in young seedlings.

The enzyme catalyses a (2R,3R)-dihydroflavonol + 2-oxoglutarate + O2 = a flavonol + succinate + CO2 + H2O. It participates in secondary metabolite biosynthesis; flavonoid biosynthesis. This is Probable flavonol synthase 5 (FLS5) from Arabidopsis thaliana (Mouse-ear cress).